We begin with the raw amino-acid sequence, 332 residues long: T-cell surface glycoprotein CD1c3 (332 aa).

An N-terminal signal peptide occupies residues 1–17 (MLFLQFLFLDVVLGGSI). Over 18-300 (TKNVVQENIS…IILYWGHGLS (283 aa)) the chain is Extracellular. N-linked (GlcNAc...) asparagine glycans are attached at residues Asn-25, Asn-38, Asn-75, and Asn-146. 2 disulfide bridges follow: Cys-120–Cys-184 and Cys-224–Cys-279. In terms of domain architecture, Ig-like spans 205 to 292 (PEVWLSSSPN…HSSLRDQDII (88 aa)). A helical transmembrane segment spans residues 301 to 321 (VILITFAVIVPLVLLIILVLL). Residues 322 to 332 (CKKCCTYQGIP) lie on the Cytoplasmic side of the membrane.

In terms of assembly, heterodimer with B2M (beta-2-microglobulin).

The protein localises to the cell membrane. Its subcellular location is the endosome membrane. Functionally, antigen-presenting protein that binds self and non-self lipid and glycolipid antigens and presents them to T-cell receptors on natural killer T-cells. This is T-cell surface glycoprotein CD1c3 (CD1C3) from Cavia porcellus (Guinea pig).